Reading from the N-terminus, the 402-residue chain is Nicotinate phosphoribosyltransferase (402 aa).

H224 is modified (phosphohistidine; by autocatalysis).

This sequence belongs to the NAPRTase family. In terms of processing, transiently phosphorylated on a His residue during the reaction cycle. Phosphorylation strongly increases the affinity for substrates and increases the rate of nicotinate D-ribonucleotide production. Dephosphorylation regenerates the low-affinity form of the enzyme, leading to product release.

The catalysed reaction is nicotinate + 5-phospho-alpha-D-ribose 1-diphosphate + ATP + H2O = nicotinate beta-D-ribonucleotide + ADP + phosphate + diphosphate. Its pathway is cofactor biosynthesis; NAD(+) biosynthesis; nicotinate D-ribonucleotide from nicotinate: step 1/1. Functionally, catalyzes the synthesis of beta-nicotinate D-ribonucleotide from nicotinate and 5-phospho-D-ribose 1-phosphate at the expense of ATP. The protein is Nicotinate phosphoribosyltransferase of Neisseria gonorrhoeae (strain ATCC 700825 / FA 1090).